A 96-amino-acid chain; its full sequence is MKIRPLHERVVVRRKEEETKTAGGIVLPGNAAEKPSQGEVLAVGEGRILDNGDVRPLAVKVGDKVVFGQYAGSTVKIDGEELLIMSESDIFGVIEG.

The protein belongs to the GroES chaperonin family. In terms of assembly, heptamer of 7 subunits arranged in a ring. Interacts with the chaperonin GroEL.

The protein localises to the cytoplasm. In terms of biological role, together with the chaperonin GroEL, plays an essential role in assisting protein folding. The GroEL-GroES system forms a nano-cage that allows encapsulation of the non-native substrate proteins and provides a physical environment optimized to promote and accelerate protein folding. GroES binds to the apical surface of the GroEL ring, thereby capping the opening of the GroEL channel. This Hahella chejuensis (strain KCTC 2396) protein is Co-chaperonin GroES.